The following is a 474-amino-acid chain: Replication-associated protein (474 aa).

The Nuclear localization signal signature appears at 248–255 (GKRFQEDR). A disordered region spans residues 455–474 (AFAPGFSLTSEPEPKRRRFF).

The protein localises to the host nucleus. Plays an essential for the replication of viral DNA. Presumably cleaves viral genomic dsRNA replicative form to initiate rolling circle replication. This is Replication-associated protein from Avon-Heathcote Estuary associated kieseladnavirus (AHEaBV).